The primary structure comprises 507 residues: Monocarboxylate transporter 9 (507 aa).

The Extracellular portion of the chain corresponds to 1-12 (MVYRKPPDGGWG). A helical membrane pass occupies residues 13 to 33 (WVIVIVSFFTQFLCYGSPLAV). The Cytoplasmic portion of the chain corresponds to 34 to 52 (GVLYLEWLDAFGEGKGKTA). Residues 53-73 (WVGSLANGIGLLASPVCSICV) form a helical membrane-spanning segment. At 74-79 (SSFGAR) the chain is on the extracellular side. Residues 80–100 (PVAIFSGFMVAGGLMMSSFAP) traverse the membrane as a helical segment. Topologically, residues 101-102 (NI) are cytoplasmic. Residues 103–123 (YFLYLSYGIVVGLGCGLLYNA) traverse the membrane as a helical segment. Residues 124–136 (TVTITCQYFDKRR) lie on the Extracellular side of the membrane. The helical transmembrane segment at 137–157 (GLALGLISTGSSVGLFIYAAL) threads the bilayer. The Cytoplasmic portion of the chain corresponds to 158–163 (QRELIE). A helical transmembrane segment spans residues 164–184 (LYGLDGCLLIVGALSLNILAC). The Extracellular portion of the chain corresponds to 185-302 (GSLMRPLESS…EETVVLFKNR (118 aa)). Residues 303 to 323 (VFSALFFAILLFDIGGFPPSL) form a helical membrane-spanning segment. Residues 324–340 (LMEDIARSANINEEDYH) are Cytoplasmic-facing. A helical transmembrane segment spans residues 341-361 (MPLVSIIGIMTAIGKLILGIL). Topologically, residues 362-369 (ADFKWVNT) are extracellular. Residues 370–390 (LYLYVLTLLMMGAALLAIPFA) form a helical membrane-spanning segment. Residues 391 to 395 (RSYFT) lie on the Cytoplasmic side of the membrane. Residues 396-416 (LAVLSGILGFLTGNWSIFPYV) form a helical membrane-spanning segment. Topologically, residues 417-430 (TTKTVGIEKLTHAY) are extracellular. A helical transmembrane segment spans residues 431–451 (GILMFFAGLGNSLGPPIVGWF). Topologically, residues 452–460 (YDWTQEYDT) are cytoplasmic. A helical membrane pass occupies residues 461-481 (AFYFSGFCVLLGGFLLLLAAL). Over 482-507 (PCWNACTDRSSKLPPNTYSYKVASSA) the chain is Extracellular.

Belongs to the major facilitator superfamily. Monocarboxylate porter (TC 2.A.1.13) family.

The protein localises to the cell membrane. It carries out the reaction creatine(in) = creatine(out). The enzyme catalyses (R)-carnitine(in) = (R)-carnitine(out). In terms of biological role, extracellular pH-and Na(+)-sensitive low-affinity creatine transporter. Also functions as a pH-independent carnitine efflux transporter. The sequence is that of Monocarboxylate transporter 9 (SLC16A9) from Gallus gallus (Chicken).